The primary structure comprises 406 residues: MLRYPYFYRTYNRLFSHFVDSGASNLDVCPHTIHTAVALHTESKAVEGTALCGPQKVYSSEEKELEAMAKLHIPVMVDQVVHCLAPQKGQVFLDMTFGSGGHTRAILQKEPDVMVYALDRDPVAYAIAEQLSRLYPTQIQALLGQFSQAEALLMKAGVQPGTIDGILMDLGCSSMQLDAPERGFSLRKDGPLDMRMDGDRYPDTPTASDVVNALDQQALASILRAYGEEKHAKKIASAIIQARSTYPISRTQQLASIVAGAFPPSAVYARKDLLQRSTHIATKTFQALRIFVNNELNELYAGLRTAEKFLKTGGRLVALSFHSLEDRIVKRFLLGISMTERFNLSIRQKVKQTSQLDSDQETEERHSVRAPLKWELIHKKVLTPEDQDVQDNPRGRSAKLRAAIKL.

The transit peptide at 1–22 (MLRYPYFYRTYNRLFSHFVDSG) directs the protein to the mitochondrion. Residues 100-102 (GGH), Asp-119, Phe-146, Asp-169, and Gln-176 contribute to the S-adenosyl-L-methionine site. A Phosphoserine modification is found at Ser-358.

The protein belongs to the methyltransferase superfamily. RsmH family.

It localises to the mitochondrion matrix. It catalyses the reaction cytidine(839) in 12S rRNA + S-adenosyl-L-methionine = N(4)-methylcytidine(839) in 12S rRNA + S-adenosyl-L-homocysteine + H(+). In terms of biological role, N4-methylcytidine (m4C) methyltransferase responsible for the methylation of position C839 in mitochondrial 12S rRNA. Involved in the stabilization of 12S rRNA folding, therefore facilitating the assembly of the mitochondrial small ribosomal subunits. This chain is 12S rRNA N(4)-cytidine methyltransferase METTL15, found in Mus musculus (Mouse).